The sequence spans 124 residues: Ribonuclease pancreatic (124 aa).

Basic and acidic residues predominate over residues 1–13 (KESAAAKFERQHM). The segment at 1-25 (KESAAAKFERQHMDPSPSSASSSNY) is disordered. Positions 7 and 10 each coordinate substrate. His12 acts as the Proton acceptor in catalysis. Cystine bridges form between Cys26–Cys84, Cys40–Cys95, Cys58–Cys110, and Cys65–Cys72. N-linked (GlcNAc...) asparagine; partial glycosylation occurs at Asn34. Residues 41-45 (KPVNT), Lys66, and Arg85 each bind substrate. The Proton donor role is filled by His119.

It belongs to the pancreatic ribonuclease family. In terms of assembly, monomer. Interacts with and forms tight 1:1 complexes with RNH1. Dimerization of two such complexes may occur. Interaction with RNH1 inhibits this protein. As to expression, pancreas.

The protein localises to the secreted. The enzyme catalyses an [RNA] containing cytidine + H2O = an [RNA]-3'-cytidine-3'-phosphate + a 5'-hydroxy-ribonucleotide-3'-[RNA].. It catalyses the reaction an [RNA] containing uridine + H2O = an [RNA]-3'-uridine-3'-phosphate + a 5'-hydroxy-ribonucleotide-3'-[RNA].. Its function is as follows. Endonuclease that catalyzes the cleavage of RNA on the 3' side of pyrimidine nucleotides. Acts on single-stranded and double-stranded RNA. In Capreolus capreolus (European roe deer), this protein is Ribonuclease pancreatic (RNASE1).